The sequence spans 264 residues: 3-methyl-2-oxobutanoate hydroxymethyltransferase (264 aa).

Residues Asp45 and Asp84 each coordinate Mg(2+). Residues 45 to 46, Asp84, and Lys112 contribute to the 3-methyl-2-oxobutanoate site; that span reads DS. Residue Glu114 participates in Mg(2+) binding. Glu181 functions as the Proton acceptor in the catalytic mechanism.

The protein belongs to the PanB family. Homodecamer; pentamer of dimers. Requires Mg(2+) as cofactor.

It localises to the cytoplasm. It catalyses the reaction 3-methyl-2-oxobutanoate + (6R)-5,10-methylene-5,6,7,8-tetrahydrofolate + H2O = 2-dehydropantoate + (6S)-5,6,7,8-tetrahydrofolate. The protein operates within cofactor biosynthesis; (R)-pantothenate biosynthesis; (R)-pantoate from 3-methyl-2-oxobutanoate: step 1/2. Catalyzes the reversible reaction in which hydroxymethyl group from 5,10-methylenetetrahydrofolate is transferred onto alpha-ketoisovalerate to form ketopantoate. The polypeptide is 3-methyl-2-oxobutanoate hydroxymethyltransferase (Escherichia coli O81 (strain ED1a)).